We begin with the raw amino-acid sequence, 184 residues long: Rhox homeobox family member 1 (184 aa).

The segment at 26-104 (QLGAASSAEG…GPQPENMQPR (79 aa)) is disordered. Residues 88-99 (PAQAAMEGPQPE) show a composition bias toward low complexity. Positions 103 to 162 (PRTRRTKFTLLQVEELESVFRHTQYPDVPTRRELAENLGVTEDKVRVWFKNKRARCRRHQ) form a DNA-binding region, homeobox. The Nuclear localization signal motif lies at 155-164 (RARCRRHQRE).

It belongs to the paired-like homeobox family. PEPP subfamily. In terms of assembly, does not interact with itself. In terms of tissue distribution, ovary, testis and epididymis. Also detected in the prostate and the mammary gland. Expressed in many tumor cell lines derived from acute lymphocytic leukemia, prostate, endometrial adenocarcinoma, melanoma, bladder carcinoma, colon carcinoma, erythroleukemia and breast carcinoma. Not expressed in placenta. In testis, mainly expressed in germ cells, but also detected in somatic cells such as Sertoli cells, Leydig cells and peritubular cells.

Its subcellular location is the nucleus. Transcription factor maybe involved in reproductive processes. Modulates expression of target genes encoding proteins involved in processes relevant to spermatogenesis. The protein is Rhox homeobox family member 1 of Homo sapiens (Human).